The primary structure comprises 260 residues: Indole-3-glycerol phosphate synthase (260 aa).

The protein belongs to the TrpC family.

The enzyme catalyses 1-(2-carboxyphenylamino)-1-deoxy-D-ribulose 5-phosphate + H(+) = (1S,2R)-1-C-(indol-3-yl)glycerol 3-phosphate + CO2 + H2O. Its pathway is amino-acid biosynthesis; L-tryptophan biosynthesis; L-tryptophan from chorismate: step 4/5. The polypeptide is Indole-3-glycerol phosphate synthase (Thermoanaerobacter pseudethanolicus (strain ATCC 33223 / 39E) (Clostridium thermohydrosulfuricum)).